A 933-amino-acid polypeptide reads, in one-letter code: uncharacterized protein (933 aa).

The span at Lys-244–Asp-255 shows a compositional bias: basic and acidic residues. Disordered regions lie at residues Lys-244–Asp-277 and Ser-343–Gly-364. Residues Ser-343–Ala-353 are compositionally biased toward polar residues. Residues Val-771–Leu-791 traverse the membrane as a helical segment. Residues Asp-890 to Glu-907 show a composition bias toward basic and acidic residues. Positions Asp-890–Lys-933 are disordered. Residues Lys-915–Lys-933 are compositionally biased toward basic residues.

It is found in the membrane. This is an uncharacterized protein from Mus musculus (Mouse).